A 71-amino-acid chain; its full sequence is Conotoxin Bu25 (71 aa).

An N-terminal signal peptide occupies residues 1–21; the sequence is MGMRMMVTVFPLVVLATTVVS. Residues 22–44 constitute a propeptide that is removed on maturation; the sequence is LRSNRASDGRRGIVNKLNDLVPK. At Arg70 the chain carries Arginine amide.

This sequence belongs to the conotoxin A superfamily. In terms of processing, contains 3 disulfide bonds. They are not indicated here, since framework IV presents two different connectivities (I-V, II-III, IV-VI and I-III, II-V, IV-VI). In terms of tissue distribution, expressed by the venom duct.

Its subcellular location is the secreted. This is Conotoxin Bu25 from Conus bullatus (Bubble cone).